The following is a 348-amino-acid chain: Holliday junction branch migration complex subunit RuvB (348 aa).

Residues 4–198 (TTDYGASNTG…FGFTAHLDFY (195 aa)) form a large ATPase domain (RuvB-L) region. Residues leucine 37, arginine 38, glycine 79, lysine 82, threonine 83, threonine 84, 145–147 (EDF), arginine 188, tyrosine 198, and arginine 235 contribute to the ATP site. Threonine 83 is a binding site for Mg(2+). The segment at 199-269 (PHEELEKLIE…DVKEALALYQ (71 aa)) is small ATPAse domain (RuvB-S). The head domain (RuvB-H) stretch occupies residues 272–348 (SEGLDRLDIA…DIIFGNYAQR (77 aa)). DNA-binding residues include arginine 327 and arginine 332.

This sequence belongs to the RuvB family. As to quaternary structure, homohexamer. Forms an RuvA(8)-RuvB(12)-Holliday junction (HJ) complex. HJ DNA is sandwiched between 2 RuvA tetramers; dsDNA enters through RuvA and exits via RuvB. An RuvB hexamer assembles on each DNA strand where it exits the tetramer. Each RuvB hexamer is contacted by two RuvA subunits (via domain III) on 2 adjacent RuvB subunits; this complex drives branch migration. In the full resolvosome a probable DNA-RuvA(4)-RuvB(12)-RuvC(2) complex forms which resolves the HJ.

The protein localises to the cytoplasm. The catalysed reaction is ATP + H2O = ADP + phosphate + H(+). Its function is as follows. The RuvA-RuvB-RuvC complex processes Holliday junction (HJ) DNA during genetic recombination and DNA repair, while the RuvA-RuvB complex plays an important role in the rescue of blocked DNA replication forks via replication fork reversal (RFR). RuvA specifically binds to HJ cruciform DNA, conferring on it an open structure. The RuvB hexamer acts as an ATP-dependent pump, pulling dsDNA into and through the RuvAB complex. RuvB forms 2 homohexamers on either side of HJ DNA bound by 1 or 2 RuvA tetramers; 4 subunits per hexamer contact DNA at a time. Coordinated motions by a converter formed by DNA-disengaged RuvB subunits stimulates ATP hydrolysis and nucleotide exchange. Immobilization of the converter enables RuvB to convert the ATP-contained energy into a lever motion, pulling 2 nucleotides of DNA out of the RuvA tetramer per ATP hydrolyzed, thus driving DNA branch migration. The RuvB motors rotate together with the DNA substrate, which together with the progressing nucleotide cycle form the mechanistic basis for DNA recombination by continuous HJ branch migration. Branch migration allows RuvC to scan DNA until it finds its consensus sequence, where it cleaves and resolves cruciform DNA. The sequence is that of Holliday junction branch migration complex subunit RuvB from Bifidobacterium longum (strain DJO10A).